The sequence spans 614 residues: UvrABC system protein C (614 aa).

A GIY-YIG domain is found at 19-97 (SLPGCYLWKN…IKKYNPKFNV (79 aa)). Positions 208 to 243 (ERLVADLKKAMMDASSKMEYERAGFLKQRIEKINQL) constitute a UVR domain.

It belongs to the UvrC family. In terms of assembly, interacts with UvrB in an incision complex.

The protein localises to the cytoplasm. Functionally, the UvrABC repair system catalyzes the recognition and processing of DNA lesions. UvrC both incises the 5' and 3' sides of the lesion. The N-terminal half is responsible for the 3' incision and the C-terminal half is responsible for the 5' incision. In Leptospira biflexa serovar Patoc (strain Patoc 1 / Ames), this protein is UvrABC system protein C.